Reading from the N-terminus, the 375-residue chain is 2-isopropylmalate synthase (375 aa).

A Pyruvate carboxyltransferase domain is found at 1-124; sequence GRTSIDNLCR…FTNIKHNELY (124 aa). Mn(2+) contacts are provided by His59, His61, and Asn95. A regulatory domain region spans residues 250–375; the sequence is QLKYFSIHSG…SKIKNIKNKK (126 aa).

This sequence belongs to the alpha-IPM synthase/homocitrate synthase family. LeuA type 1 subfamily. In terms of assembly, homodimer.

The protein resides in the cytoplasm. It carries out the reaction 3-methyl-2-oxobutanoate + acetyl-CoA + H2O = (2S)-2-isopropylmalate + CoA + H(+). The protein operates within amino-acid biosynthesis; L-leucine biosynthesis; L-leucine from 3-methyl-2-oxobutanoate: step 1/4. Catalyzes the condensation of the acetyl group of acetyl-CoA with 3-methyl-2-oxobutanoate (2-ketoisovalerate) to form 3-carboxy-3-hydroxy-4-methylpentanoate (2-isopropylmalate). This is 2-isopropylmalate synthase from Buchnera aphidicola subsp. Thelaxes suberi.